The primary structure comprises 271 residues: 4-hydroxy-tetrahydrodipicolinate reductase (271 aa).

NAD(+) is bound by residues glycine 11 to methionine 16, glutamate 37, glycine 102 to threonine 104, and alanine 126 to methionine 129. Catalysis depends on histidine 159, which acts as the Proton donor/acceptor. Residue histidine 160 participates in (S)-2,3,4,5-tetrahydrodipicolinate binding. Lysine 163 (proton donor) is an active-site residue. Glycine 169–threonine 170 serves as a coordination point for (S)-2,3,4,5-tetrahydrodipicolinate.

This sequence belongs to the DapB family.

It localises to the cytoplasm. The enzyme catalyses (S)-2,3,4,5-tetrahydrodipicolinate + NAD(+) + H2O = (2S,4S)-4-hydroxy-2,3,4,5-tetrahydrodipicolinate + NADH + H(+). It catalyses the reaction (S)-2,3,4,5-tetrahydrodipicolinate + NADP(+) + H2O = (2S,4S)-4-hydroxy-2,3,4,5-tetrahydrodipicolinate + NADPH + H(+). It functions in the pathway amino-acid biosynthesis; L-lysine biosynthesis via DAP pathway; (S)-tetrahydrodipicolinate from L-aspartate: step 4/4. Its function is as follows. Catalyzes the conversion of 4-hydroxy-tetrahydrodipicolinate (HTPA) to tetrahydrodipicolinate. The chain is 4-hydroxy-tetrahydrodipicolinate reductase from Parvibaculum lavamentivorans (strain DS-1 / DSM 13023 / NCIMB 13966).